Here is a 654-residue protein sequence, read N- to C-terminus: MQKKIKKRLKKENLLRIFSKTLAFLFLVLFISFFVFLLTEATKIGPDFAKSLFNLEFNLGNKQAGIWFPLLVSFIVSIGALIIASYIGVRTSFFLVYRCKPKIRKKLSLIIDILSGIPSVIFGLFASQILSIFFRDILKLPPLSLLNVIAMLSFMIIPIVISLTTNTLTYVNNDLISVVVSLGENKTSAIYKIIKKEIKPQLTVILTLAFARAISETMAVNFVLQSVNYQEVINNNRFFTSDLKTLGSVISTFIFSENGDEQINGVLYIFGIIILILVSLLNFFAIWSANPKTLERYPFLKKISNFIYQVVWFIPNNISALFVDLTSTRQSVKKIKVNNINERSLFFKERLQSVVWIKLNYFLKIFQELICTFLAFGFVLAILLFVFINGSVAINNNGSTVFSFEADSTGRALVNTLVIILITITITFPLALLIAIWLNEYNNSKVVKNVFNFVIDSLSSMPSIIYGLFGLSFFLRVLQLSAGGANGTSLIAGILTISVVILLFLIRTCQQALNNVSWDLRISAFALGISKREVIFKIVLPSALKGLIVALILSINRIIAETAPFFITSGLSSSNLFHLSLPGQTLTTRIYGQLFSINSNAISVMLETSLVSVVFLILLIFFSSYLIPSLFLLNKQKWLVIKSKFQSFKLWKRT.

The next 12 membrane-spanning stretches (helical) occupy residues 22–42 (LAFL…TEAT), 64–84 (AGIW…LIIA), 113–133 (ILSG…LSIF), 143–163 (LSLL…VISL), 266–286 (VLYI…FFAI), 303–323 (ISNF…ALFV), 368–388 (ELIC…FVFI), 417–437 (LVII…IAIW), 453–473 (FVID…GLSF), 486–506 (NGTS…LFLI), 535–555 (IFKI…ILSI), and 613–633 (VVFL…LFLL). Positions 70 to 285 (LLVSFIVSIG…ILVSLLNFFA (216 aa)) constitute an ABC transmembrane type-1 1 domain. The 211-residue stretch at 413-623 (LVNTLVIILI…VFLILLIFFS (211 aa)) folds into the ABC transmembrane type-1 2 domain.

This sequence belongs to the binding-protein-dependent transport system permease family. CysTW subfamily.

It localises to the cell membrane. Its function is as follows. Could be part of a binding-protein-dependent transport system for phosphate; probably responsible for the translocation of the substrate across the membrane. The polypeptide is Phosphate transport system permease protein PstA homolog (pstA) (Mycoplasma genitalium (strain ATCC 33530 / DSM 19775 / NCTC 10195 / G37) (Mycoplasmoides genitalium)).